The sequence spans 893 residues: DNA mismatch repair protein MutS (893 aa).

631-638 (GPNMAGKS) provides a ligand contact to ATP. The disordered stretch occupies residues 821–858 (AGRPRVAVRQPQGGRRGASTGQLGLFGMEPAQGGTGVT).

The protein belongs to the DNA mismatch repair MutS family.

Functionally, this protein is involved in the repair of mismatches in DNA. It is possible that it carries out the mismatch recognition step. This protein has a weak ATPase activity. The polypeptide is DNA mismatch repair protein MutS (Myxococcus xanthus (strain DK1622)).